A 377-amino-acid chain; its full sequence is Probable tRNA pseudouridine synthase D (377 aa).

Aspartate 89 serves as the catalytic Nucleophile. A TRUD domain is found at 160 to 377 (YLPAFIGYQR…ILRGDPRKFT (218 aa)).

Belongs to the pseudouridine synthase TruD family.

It catalyses the reaction uridine(13) in tRNA = pseudouridine(13) in tRNA. Its function is as follows. Could be responsible for synthesis of pseudouridine from uracil-13 in transfer RNAs. The chain is Probable tRNA pseudouridine synthase D from Saccharolobus solfataricus (strain ATCC 35092 / DSM 1617 / JCM 11322 / P2) (Sulfolobus solfataricus).